A 374-amino-acid polypeptide reads, in one-letter code: Carnitine monooxygenase oxygenase subunit (374 aa).

Residues 47–155 (WICVAHSSEL…LEEYAGFVFI (109 aa)) form the Rieske domain. [2Fe-2S] cluster is bound by residues cysteine 89, histidine 91, cysteine 109, and histidine 112. Residues histidine 211, histidine 216, and aspartate 325 each coordinate Fe cation.

This sequence belongs to the bacterial ring-hydroxylating dioxygenase alpha subunit family. CntA subfamily. Composed of an oxygenase subunit and a reductase subunit. It depends on [2Fe-2S] cluster as a cofactor. Fe cation serves as cofactor.

The catalysed reaction is (R)-carnitine + NADH + O2 + H(+) = (3R)-3-hydroxy-4-oxobutanoate + trimethylamine + NAD(+) + H2O. It carries out the reaction (R)-carnitine + NADPH + O2 + H(+) = (3R)-3-hydroxy-4-oxobutanoate + trimethylamine + NADP(+) + H2O. It functions in the pathway amine and polyamine metabolism; carnitine metabolism. Functionally, converts carnitine to trimethylamine and malic semialdehyde. This is Carnitine monooxygenase oxygenase subunit (yeaW) from Escherichia coli O157:H7.